Consider the following 277-residue polypeptide: Putative phosphoenolpyruvate synthase regulatory protein (277 aa).

Gly157–Thr164 lines the ADP pocket.

This sequence belongs to the pyruvate, phosphate/water dikinase regulatory protein family. PSRP subfamily.

It catalyses the reaction [pyruvate, water dikinase] + ADP = [pyruvate, water dikinase]-phosphate + AMP + H(+). The enzyme catalyses [pyruvate, water dikinase]-phosphate + phosphate + H(+) = [pyruvate, water dikinase] + diphosphate. In terms of biological role, bifunctional serine/threonine kinase and phosphorylase involved in the regulation of the phosphoenolpyruvate synthase (PEPS) by catalyzing its phosphorylation/dephosphorylation. This is Putative phosphoenolpyruvate synthase regulatory protein from Azoarcus sp. (strain BH72).